Reading from the N-terminus, the 151-residue chain is MERALLILKPDAVQRGLIGAIISRFEQRGLKFQGLKLMQVDEALARRHYAEHEGKSFFEGLVKYITSAPVVVAVVAGKPGTVELVRTMVGATNPAKAAPGTIRGDFGVDIGRNLIHASDSPESGERETAIFFQPHELIGDWNRTLDGWIYE.

The ATP site is built by K9, F57, R86, T92, R103, and N113. H116 acts as the Pros-phosphohistidine intermediate in catalysis.

It belongs to the NDK family. Homotetramer. Mg(2+) is required as a cofactor.

It is found in the cytoplasm. The catalysed reaction is a 2'-deoxyribonucleoside 5'-diphosphate + ATP = a 2'-deoxyribonucleoside 5'-triphosphate + ADP. The enzyme catalyses a ribonucleoside 5'-diphosphate + ATP = a ribonucleoside 5'-triphosphate + ADP. Its function is as follows. Major role in the synthesis of nucleoside triphosphates other than ATP. The ATP gamma phosphate is transferred to the NDP beta phosphate via a ping-pong mechanism, using a phosphorylated active-site intermediate. This is Nucleoside diphosphate kinase from Chloroflexus aggregans (strain MD-66 / DSM 9485).